Consider the following 216-residue polypeptide: Glycerol-3-phosphate acyltransferase (216 aa).

The next 5 helical transmembrane spans lie at 5 to 25, 70 to 90, 118 to 138, 140 to 160, and 164 to 184; these read LIALAAAAGGYLFGSIPFGLV, IAAAVFGYFLGTTAGLVAGAF, VVFWPVGLTVIATWLAMAAIF, ISSLAALAAALAAPFAALAWG, and VAIMAGLLTVLIYWLHRANIS. Positions 192–201 are enriched in basic and acidic residues; the sequence is PRIGGKKSET. Positions 192 to 216 are disordered; the sequence is PRIGGKKSETSADVSDGDDPDTPAT. Positions 206 to 216 are enriched in acidic residues; that stretch reads SDGDDPDTPAT.

Belongs to the PlsY family. In terms of assembly, probably interacts with PlsX.

It is found in the cell inner membrane. The catalysed reaction is an acyl phosphate + sn-glycerol 3-phosphate = a 1-acyl-sn-glycero-3-phosphate + phosphate. The protein operates within lipid metabolism; phospholipid metabolism. In terms of biological role, catalyzes the transfer of an acyl group from acyl-phosphate (acyl-PO(4)) to glycerol-3-phosphate (G3P) to form lysophosphatidic acid (LPA). This enzyme utilizes acyl-phosphate as fatty acyl donor, but not acyl-CoA or acyl-ACP. The chain is Glycerol-3-phosphate acyltransferase from Maricaulis maris (strain MCS10) (Caulobacter maris).